The following is a 270-amino-acid chain: NAD kinase (270 aa).

Residue aspartate 61 is the Proton acceptor of the active site. NAD(+) is bound by residues 61–62, 133–134, arginine 144, arginine 163, aspartate 165, and 176–181; these read DG, NE, and TAYNLS.

It belongs to the NAD kinase family. It depends on a divalent metal cation as a cofactor.

Its subcellular location is the cytoplasm. The catalysed reaction is NAD(+) + ATP = ADP + NADP(+) + H(+). Functionally, involved in the regulation of the intracellular balance of NAD and NADP, and is a key enzyme in the biosynthesis of NADP. Catalyzes specifically the phosphorylation on 2'-hydroxyl of the adenosine moiety of NAD to yield NADP. This Natronomonas pharaonis (strain ATCC 35678 / DSM 2160 / CIP 103997 / JCM 8858 / NBRC 14720 / NCIMB 2260 / Gabara) (Halobacterium pharaonis) protein is NAD kinase.